A 168-amino-acid polypeptide reads, in one-letter code: Ribosome maturation factor RimM (168 aa).

A PRC barrel domain is found at 96-168 (EDEYFITDLI…VMIVRLLEGL (73 aa)).

Belongs to the RimM family. As to quaternary structure, binds ribosomal protein uS19.

Its subcellular location is the cytoplasm. An accessory protein needed during the final step in the assembly of 30S ribosomal subunit, possibly for assembly of the head region. Essential for efficient processing of 16S rRNA. May be needed both before and after RbfA during the maturation of 16S rRNA. It has affinity for free ribosomal 30S subunits but not for 70S ribosomes. The chain is Ribosome maturation factor RimM from Caldanaerobacter subterraneus subsp. tengcongensis (strain DSM 15242 / JCM 11007 / NBRC 100824 / MB4) (Thermoanaerobacter tengcongensis).